The following is a 1017-amino-acid chain: Rho-GTPase-activating protein LRG1 (1017 aa).

Residue Met-1 is modified to N-acetylmethionine. LIM zinc-binding domains follow at residues 28–88 and 98–148; these read CARC…LCQY and CHVC…CKYH. Positions 155–184 constitute an LIM zinc-binding 3; truncated domain; that stretch reads KRCKGCEFPISDQYIEFPKGEEIHCWHPEC. Residues 419 to 474 enclose the LIM zinc-binding 4 domain; that stretch reads CAGCNKYIQEECIQFYEHRWHIACFTCSSCHKNINPRSLTDPTFNKEKKKILCSHC. A Phosphoserine modification is found at Ser-562. A disordered region spans residues 570-602; it reads TDLNDPTKQGDSKNLVIQTDDPSSSQQVSTREN. Residues 584-602 show a composition bias toward polar residues; the sequence is LVIQTDDPSSSQQVSTREN. Positions 730–953 constitute a Rho-GAP domain; it reads APLDVLCEKW…YLITHNEEMA (224 aa).

In terms of assembly, interacts with CDC42, RHO1 and RHO2.

It is found in the cytoplasm. It localises to the bud. The protein localises to the bud neck. Functionally, acts in signal transduction. Activates CDC42, RHO1 and RHO2. Negatively regulates 1,3-beta-glucan synthesis. May be responsible for the down-regulation of CDC42 during mating. The protein is Rho-GTPase-activating protein LRG1 (LRG1) of Saccharomyces cerevisiae (strain ATCC 204508 / S288c) (Baker's yeast).